Reading from the N-terminus, the 4731-residue chain is Dynein axonemal heavy chain 8 (4731 aa).

The disordered stretch occupies residues 1–145 (MESEEGNAEP…SKFRRSMTGI (145 aa)). A compositionally biased stretch (pro residues) spans 9 to 55 (EPPPPSEEAPPPVVEEAPPPLPPEDTAPPPPEEQAPPPEGDAAPPPT). Residues 66–75 (EAPHPEDPKL) show a composition bias toward basic and acidic residues. A compositionally biased stretch (acidic residues) spans 94–106 (SDEEVTLPEDEES). Over residues 122-133 (SVLSDGISQSSR) the composition is skewed to polar residues. Positions 145-169 (IPNLQETLKEKQARFREARENRKMK) form a coiled coil. The residue at position 917 (Ser917) is a Phosphoserine. The tract at residues 1177 to 1201 (FQNNSRGSDQPPASGKPLKKEERSF) is disordered. The stretch at 1543–1567 (DVDIEKINAELQEFQNRCRKLPRAL) forms a coiled coil. AAA regions lie at residues 2049–2271 (YQNE…VLRT), 2331–2550 (SAVD…KLSL), 2657–2910 (FYPT…IWQG), and 3021–3275 (QFNE…YRRR). Residues 2087–2094 (GPAGTGKT) and 2369–2376 (GPSGSGKT) each bind ATP. The segment at 3290–3587 (YKSIYTDKVK…MDLLNDADMC (298 aa)) is stalk. 3 coiled-coil regions span residues 3313 to 3405 (DKLM…ALNT), 3531 to 3583 (LKAN…LLND), and 3836 to 3871 (RVILTEKQELESERVKLLEDVTFNKRKMKELEDNLL). 2 AAA regions span residues 3673 to 3903 (LVDP…EVSE) and 4118 to 4332 (ARKY…FIQN).

The protein belongs to the dynein heavy chain family. Consists of at least two heavy chains and a number of intermediate and light chains. Isoform 1 and/or isoform 2 are expressed in spermatocytes and mature sperm (at protein level). Testis-specific. Accumulates exclusively in mid to late spermatocytes.

It localises to the cytoplasm. Its subcellular location is the cytoskeleton. It is found in the flagellum axoneme. Functionally, force generating protein component of the outer dynein arms (ODAs) in the sperm flagellum. Produces force towards the minus ends of microtubules. Dynein has ATPase activity; the force-producing power stroke is thought to occur on release of ADP. Involved in sperm motility; implicated in sperm flagellar assembly. The protein is Dynein axonemal heavy chain 8 (Dnah8) of Mus musculus (Mouse).